The following is a 369-amino-acid chain: F-box protein At3g08750 (369 aa).

The F-box domain maps to 6-53 (CLLLPSLPFELIEEILYKIPAESLIRFKSTCKKWYNLITEKRFMYNHL).

This chain is F-box protein At3g08750, found in Arabidopsis thaliana (Mouse-ear cress).